The following is a 510-amino-acid chain: Sulfoquinovosyl transferase SQD2 (510 aa).

The transit peptide at 1–83 (MTTLSSINLS…SNDMTITQVR (83 aa)) directs the protein to the chloroplast. Residue serine 88 is modified to Phosphoserine. The chain crosses the membrane as a helical span at residues 198–218 (PGVMVFGALAIAKMLSVPIVM).

The protein belongs to the glycosyltransferase group 1 family. Glycosyltransferase 4 subfamily.

It is found in the plastid. Its subcellular location is the chloroplast membrane. The enzyme catalyses UDP-alpha-D-6-sulfoquinovose + a 1,2-diacyl-sn-glycerol = a 6-sulfo-alpha-D-quinovosyldiacylglycerol + UDP + H(+). Its pathway is glycolipid biosynthesis. Its function is as follows. Catalyzes the transfer of the sulfoquinovose moiety from UDP-sulfoquinovose to diacylglycerol during sulfolipid biosynthesis. Sulfolipid contributes to maintaining a negatively charged lipid-water interface, a requirement for proper function of photosynthetic membranes. Sulfolipid may also function as a substitute of anionic phospholipids under phosphate-limited growth conditions. In Arabidopsis thaliana (Mouse-ear cress), this protein is Sulfoquinovosyl transferase SQD2.